Reading from the N-terminus, the 531-residue chain is Transcription factor LG2 (531 aa).

2 disordered regions span residues 115–154 and 195–220; these read RHQQ…ASSA and LHGG…KLVD. Residues 116–154 are compositionally biased toward polar residues; the sequence is HQQQLHSGNSQSVGSTGTDSSSAQNTMSQMELVSPASSA. A bZIP domain is found at 220-264; it reads DAKTERRLAQNREAARKSRLRKKAYVQQLETSRIRLQQVEHELQR. Residues 222 to 242 form a basic motif region; that stretch reads KTERRLAQNREAARKSRLRKK. A Nuclear localization signal motif is present at residues 224 to 231; that stretch reads ERRLAQNR. Residues 248–262 are leucine-zipper; the sequence is LETSRIRLQQVEHEL. In terms of domain architecture, DOG1 spans 285–499; the sequence is AAMFDMEYAR…RALSNLWASR (215 aa).

The protein belongs to the bZIP family. In terms of assembly, binds DNA as a dimer. In terms of tissue distribution, expression in meristem/developing ligule regions.

Its subcellular location is the nucleus. Functionally, required for the formation of the blade-sheath boundary in leaves. Promotes flowering. The chain is Transcription factor LG2 from Zea mays (Maize).